Consider the following 73-residue polypeptide: Translation initiation factor IF-1 (73 aa).

Residues 1-73 (MAKKDGVIEI…TRGRIVYRYK (73 aa)) enclose the S1-like domain.

This sequence belongs to the IF-1 family. In terms of assembly, component of the 30S ribosomal translation pre-initiation complex which assembles on the 30S ribosome in the order IF-2 and IF-3, IF-1 and N-formylmethionyl-tRNA(fMet); mRNA recruitment can occur at any time during PIC assembly.

The protein localises to the cytoplasm. Its function is as follows. One of the essential components for the initiation of protein synthesis. Stabilizes the binding of IF-2 and IF-3 on the 30S subunit to which N-formylmethionyl-tRNA(fMet) subsequently binds. Helps modulate mRNA selection, yielding the 30S pre-initiation complex (PIC). Upon addition of the 50S ribosomal subunit IF-1, IF-2 and IF-3 are released leaving the mature 70S translation initiation complex. This chain is Translation initiation factor IF-1, found in Paenarthrobacter aurescens (strain TC1).